Reading from the N-terminus, the 208-residue chain is Glycerol-3-phosphate acyltransferase (208 aa).

Helical transmembrane passes span 4-24 (LALSMIIFAYLLGSISSAVLI), 56-76 (VAVLLCDMLKGTIPVWGGYFL), 80-100 (PFMLGLVAIAACLGHMYPIFF), 117-137 (PIGLDLTAMVMATWLVVVVLF), and 139-159 (YSSLAALVTVLLAPLYTWLIK).

It belongs to the PlsY family. As to quaternary structure, probably interacts with PlsX.

It is found in the cell inner membrane. It catalyses the reaction an acyl phosphate + sn-glycerol 3-phosphate = a 1-acyl-sn-glycero-3-phosphate + phosphate. The protein operates within lipid metabolism; phospholipid metabolism. Its function is as follows. Catalyzes the transfer of an acyl group from acyl-phosphate (acyl-PO(4)) to glycerol-3-phosphate (G3P) to form lysophosphatidic acid (LPA). This enzyme utilizes acyl-phosphate as fatty acyl donor, but not acyl-CoA or acyl-ACP. The chain is Glycerol-3-phosphate acyltransferase from Vibrio cholerae serotype O1 (strain ATCC 39541 / Classical Ogawa 395 / O395).